A 185-amino-acid chain; its full sequence is Large ribosomal subunit protein uL5 (185 aa).

The protein belongs to the universal ribosomal protein uL5 family. In terms of assembly, part of the 50S ribosomal subunit; part of the 5S rRNA/L5/L18/L25 subcomplex. Contacts the 5S rRNA and the P site tRNA. Forms a bridge to the 30S subunit in the 70S ribosome.

Functionally, this is one of the proteins that bind and probably mediate the attachment of the 5S RNA into the large ribosomal subunit, where it forms part of the central protuberance. In the 70S ribosome it contacts protein S13 of the 30S subunit (bridge B1b), connecting the 2 subunits; this bridge is implicated in subunit movement. Contacts the P site tRNA; the 5S rRNA and some of its associated proteins might help stabilize positioning of ribosome-bound tRNAs. This chain is Large ribosomal subunit protein uL5, found in Bacteroides thetaiotaomicron (strain ATCC 29148 / DSM 2079 / JCM 5827 / CCUG 10774 / NCTC 10582 / VPI-5482 / E50).